A 456-amino-acid chain; its full sequence is Adenylosuccinate synthetase isozyme 2 (456 aa).

Positions 1 to 24 (MAFAETNPAASSLPNGDCGRPRAR) are disordered. Residues 39 to 45 (GDEGKGK) and 67 to 69 (GHT) contribute to the GTP site. Asp-40 (proton acceptor) is an active-site residue. Residues Asp-40 and Gly-67 each coordinate Mg(2+). Residue Asp-40 participates in substrate binding. Residues 40 to 43 (DEGK), 65 to 68 (NAGH), Thr-162, Arg-176, Asn-255, Thr-270, and Arg-334 contribute to the IMP site. His-68 serves as the catalytic Proton donor. 330–336 (VTTGRKR) is a binding site for substrate. Residues Arg-336, 362–364 (KLD), and 444–447 (GVGK) each bind GTP.

It belongs to the adenylosuccinate synthetase family. Homodimer. It depends on Mg(2+) as a cofactor. Widely expressed.

It is found in the cytoplasm. The protein localises to the mitochondrion. The enzyme catalyses IMP + L-aspartate + GTP = N(6)-(1,2-dicarboxyethyl)-AMP + GDP + phosphate + 2 H(+). It functions in the pathway purine metabolism; AMP biosynthesis via de novo pathway; AMP from IMP: step 1/2. With respect to regulation, inhibited competitively by AMP and IMP and non-competitively by fructose 1,6-bisphosphate. Plays an important role in the de novo pathway and in the salvage pathway of purine nucleotide biosynthesis. Catalyzes the first committed step in the biosynthesis of AMP from IMP. The sequence is that of Adenylosuccinate synthetase isozyme 2 from Sus scrofa (Pig).